A 367-amino-acid polypeptide reads, in one-letter code: Chorismate synthase (367 aa).

An NADP(+)-binding site is contributed by arginine 48. FMN is bound by residues 125-127 (RAS), glycine 290, 305-309 (KPTSS), and arginine 333.

Belongs to the chorismate synthase family. As to quaternary structure, homotetramer. It depends on FMNH2 as a cofactor.

The catalysed reaction is 5-O-(1-carboxyvinyl)-3-phosphoshikimate = chorismate + phosphate. The protein operates within metabolic intermediate biosynthesis; chorismate biosynthesis; chorismate from D-erythrose 4-phosphate and phosphoenolpyruvate: step 7/7. Its function is as follows. Catalyzes the anti-1,4-elimination of the C-3 phosphate and the C-6 proR hydrogen from 5-enolpyruvylshikimate-3-phosphate (EPSP) to yield chorismate, which is the branch point compound that serves as the starting substrate for the three terminal pathways of aromatic amino acid biosynthesis. This reaction introduces a second double bond into the aromatic ring system. The protein is Chorismate synthase of Protochlamydia amoebophila (strain UWE25).